Consider the following 408-residue polypeptide: MSVKTLDDLLAEGVQGRGVLVRSDLNVPLDDDGNITDPGRVIASVPTLQALAEAGAKVIVTAHLGRPKGEPDPKLSLAPVAAALGEKLGRHVQLAGDVVGTDALARAEGLTDGDVLLLENIRFDARETSKDDSERLSLAKALAALVEGPDGSPGVFVSDGFGVVHRKQASVYDVATLLPHYAGTLVAAEVKVLQQLTSSTDRPYAVVLGGSKVSDKLAVIENLATKADSLIIGGGMCFTFLAAQGFSVGSSLLQEEMVDTCRRLLDEYADVIHLPVDIVVADKFAADAEAETVAADRIPDGKMGLDIGPGSVERFTALLSNAKTVFWNGPMGVFEFPAFAAGTKGVAEAIIGATGKGAFSVVGGGDSAAAVRRLGLPEDGFSHISTGGGASLEYLEGKELPGIQVLES.

Residues 24–26 (DLN), Arg40, 63–66 (HLGR), Arg122, and Arg166 each bind substrate. ATP-binding positions include Lys216, Gly304, Glu335, and 364 to 367 (GGDS).

Belongs to the phosphoglycerate kinase family. As to quaternary structure, monomer.

The protein localises to the cytoplasm. It carries out the reaction (2R)-3-phosphoglycerate + ATP = (2R)-3-phospho-glyceroyl phosphate + ADP. Its pathway is carbohydrate degradation; glycolysis; pyruvate from D-glyceraldehyde 3-phosphate: step 2/5. In Mycolicibacterium smegmatis (strain ATCC 700084 / mc(2)155) (Mycobacterium smegmatis), this protein is Phosphoglycerate kinase.